A 301-amino-acid polypeptide reads, in one-letter code: Sulfate adenylyltransferase subunit 2 (301 aa).

This sequence belongs to the PAPS reductase family. CysD subfamily. In terms of assembly, heterodimer composed of CysD, the smaller subunit, and CysN.

The catalysed reaction is sulfate + ATP + H(+) = adenosine 5'-phosphosulfate + diphosphate. It functions in the pathway sulfur metabolism; hydrogen sulfide biosynthesis; sulfite from sulfate: step 1/3. Its function is as follows. With CysN forms the ATP sulfurylase (ATPS) that catalyzes the adenylation of sulfate producing adenosine 5'-phosphosulfate (APS) and diphosphate, the first enzymatic step in sulfur assimilation pathway. APS synthesis involves the formation of a high-energy phosphoric-sulfuric acid anhydride bond driven by GTP hydrolysis by CysN coupled to ATP hydrolysis by CysD. This chain is Sulfate adenylyltransferase subunit 2, found in Geotalea daltonii (strain DSM 22248 / JCM 15807 / FRC-32) (Geobacter daltonii).